The sequence spans 207 residues: Large ribosomal subunit protein bL25 (207 aa).

The interval 186-207 (SKPRGGAGAEGEADAEGEAAAE) is disordered. The segment covering 196 to 207 (GEADAEGEAAAE) has biased composition (acidic residues).

This sequence belongs to the bacterial ribosomal protein bL25 family. CTC subfamily. In terms of assembly, part of the 50S ribosomal subunit; part of the 5S rRNA/L5/L18/L25 subcomplex. Contacts the 5S rRNA. Binds to the 5S rRNA independently of L5 and L18.

Functionally, this is one of the proteins that binds to the 5S RNA in the ribosome where it forms part of the central protuberance. The polypeptide is Large ribosomal subunit protein bL25 (Methylobacillus flagellatus (strain ATCC 51484 / DSM 6875 / VKM B-1610 / KT)).